Here is a 380-residue protein sequence, read N- to C-terminus: Cytochrome b (380 aa).

4 helical membrane-spanning segments follow: residues 33–53, 77–98, 113–133, and 178–198; these read FGSLLGLCLITQTLTGLFLAM, WLLRNIHANGASFFFICIYLHI, WNIGVLLLLLVMMTAFVGYVL, and FFTFHFLLPFIIMGTTMLHLL. 2 residues coordinate heme b: H83 and H97. The heme b site is built by H182 and H196. H201 serves as a coordination point for a ubiquinone. 4 helical membrane-spanning segments follow: residues 226–246, 288–308, 320–340, and 347–367; these read YKDLLGFTILLATLSALALLN, LGGVLALLFSILILVVVPTLH, SSQTLFWILVANMLVLTWIGG, and FIIIGQVASVLYFMLFLFFIP.

This sequence belongs to the cytochrome b family. The cytochrome bc1 complex contains 3 respiratory subunits (MT-CYB, CYC1 and UQCRFS1), 2 core proteins (UQCRC1 and UQCRC2) and probably 6 low-molecular weight proteins. It depends on heme b as a cofactor.

The protein localises to the mitochondrion inner membrane. Its function is as follows. Component of the ubiquinol-cytochrome c reductase complex (complex III or cytochrome b-c1 complex) that is part of the mitochondrial respiratory chain. The b-c1 complex mediates electron transfer from ubiquinol to cytochrome c. Contributes to the generation of a proton gradient across the mitochondrial membrane that is then used for ATP synthesis. This chain is Cytochrome b (mt-cyb), found in Lepisosteus oculatus (Spotted gar).